The chain runs to 128 residues: Small ribosomal subunit protein uS9 (128 aa).

The protein belongs to the universal ribosomal protein uS9 family. Part of the 30S ribosomal subunit. Contacts proteins S7 and S10.

Its function is as follows. Part of the top of the head of the 30S subunit. The C-terminal region penetrates the head emerging in the P-site where it contacts tRNA. The protein is Small ribosomal subunit protein uS9 (rpsI) of Thermus thermophilus (strain ATCC BAA-163 / DSM 7039 / HB27).